We begin with the raw amino-acid sequence, 91 residues long: Small ribosomal subunit protein uS19 (91 aa).

The protein belongs to the universal ribosomal protein uS19 family.

Functionally, protein S19 forms a complex with S13 that binds strongly to the 16S ribosomal RNA. This chain is Small ribosomal subunit protein uS19, found in Pseudomonas putida (strain ATCC 700007 / DSM 6899 / JCM 31910 / BCRC 17059 / LMG 24140 / F1).